Here is a 434-residue protein sequence, read N- to C-terminus: Methylenetetrahydrofolate--tRNA-(uracil-5-)-methyltransferase TrmFO (434 aa).

10 to 15 (GAGLAG) serves as a coordination point for FAD.

This sequence belongs to the MnmG family. TrmFO subfamily. It depends on FAD as a cofactor.

Its subcellular location is the cytoplasm. The enzyme catalyses uridine(54) in tRNA + (6R)-5,10-methylene-5,6,7,8-tetrahydrofolate + NADH + H(+) = 5-methyluridine(54) in tRNA + (6S)-5,6,7,8-tetrahydrofolate + NAD(+). It catalyses the reaction uridine(54) in tRNA + (6R)-5,10-methylene-5,6,7,8-tetrahydrofolate + NADPH + H(+) = 5-methyluridine(54) in tRNA + (6S)-5,6,7,8-tetrahydrofolate + NADP(+). Its function is as follows. Catalyzes the folate-dependent formation of 5-methyl-uridine at position 54 (M-5-U54) in all tRNAs. The protein is Methylenetetrahydrofolate--tRNA-(uracil-5-)-methyltransferase TrmFO of Bacillus cereus (strain ATCC 10987 / NRS 248).